A 312-amino-acid chain; its full sequence is Small ribosomal subunit protein uS2 (312 aa).

This sequence belongs to the universal ribosomal protein uS2 family.

This Ruthia magnifica subsp. Calyptogena magnifica protein is Small ribosomal subunit protein uS2.